The sequence spans 1354 residues: Phosphoribosylformylglycinamidine synthase (1354 aa).

ATP-binding positions include glycine 327–aspartate 338, serine 407–phenylalanine 409, and alanine 714. Mg(2+) is bound by residues aspartate 715, glutamate 754, asparagine 758, and aspartate 918. Serine 920 is a binding site for ATP. Residues valine 1087–proline 1337 form the Glutamine amidotransferase type-1 domain. Cysteine 1180 (nucleophile) is an active-site residue. Residues histidine 1310 and glutamate 1312 contribute to the active site.

It in the N-terminal section; belongs to the FGAMS family.

It carries out the reaction N(2)-formyl-N(1)-(5-phospho-beta-D-ribosyl)glycinamide + L-glutamine + ATP + H2O = 2-formamido-N(1)-(5-O-phospho-beta-D-ribosyl)acetamidine + L-glutamate + ADP + phosphate + H(+). Its pathway is purine metabolism; IMP biosynthesis via de novo pathway; 5-amino-1-(5-phospho-D-ribosyl)imidazole from N(2)-formyl-N(1)-(5-phospho-D-ribosyl)glycinamide: step 1/2. Its function is as follows. Phosphoribosylformylglycinamidine synthase involved in the purines biosynthetic pathway. Catalyzes the ATP-dependent conversion of formylglycinamide ribonucleotide (FGAR) and glutamine to yield formylglycinamidine ribonucleotide (FGAM) and glutamate. Because of its role in metabolisms, is involved in sleep regulation. This chain is Phosphoribosylformylglycinamidine synthase, found in Drosophila melanogaster (Fruit fly).